A 319-amino-acid chain; its full sequence is tRNA uridine(34) hydroxylase (319 aa).

Positions 127 to 221 (KQEDTVIIDA…YGKDPEVQGE (95 aa)) constitute a Rhodanese domain. The active-site Cysteine persulfide intermediate is the Cys181.

Belongs to the TrhO family.

It carries out the reaction uridine(34) in tRNA + AH2 + O2 = 5-hydroxyuridine(34) in tRNA + A + H2O. Catalyzes oxygen-dependent 5-hydroxyuridine (ho5U) modification at position 34 in tRNAs. This chain is tRNA uridine(34) hydroxylase, found in Bacillus cereus (strain ZK / E33L).